Reading from the N-terminus, the 141-residue chain is Hemoglobin subunit alpha (141 aa).

The 141-residue stretch at 1 to 141 (VLSPADKTNV…VSTVLTSKYR (141 aa)) folds into the Globin domain. Ser3 bears the Phosphoserine mark. Lys7 is subject to N6-succinyllysine. Residue Thr8 is modified to Phosphothreonine. Lys11 is modified (N6-succinyllysine). Lys16 carries the post-translational modification N6-acetyllysine; alternate. Lys16 is modified (N6-succinyllysine; alternate). Phosphotyrosine is present on Tyr24. Position 35 is a phosphoserine (Ser35). Lys40 bears the N6-succinyllysine mark. Ser49 carries the phosphoserine modification. An O2-binding site is contributed by His58. Position 87 (His87) interacts with heme b. Ser102 is subject to Phosphoserine. Thr108 carries the phosphothreonine modification. At Ser124 the chain carries Phosphoserine. Phosphothreonine occurs at positions 134 and 137. Ser138 is subject to Phosphoserine.

It belongs to the globin family. Heterotetramer of two alpha chains and two beta chains. In terms of tissue distribution, red blood cells.

Involved in oxygen transport from the lung to the various peripheral tissues. In terms of biological role, hemopressin acts as an antagonist peptide of the cannabinoid receptor CNR1. Hemopressin-binding efficiently blocks cannabinoid receptor CNR1 and subsequent signaling. The polypeptide is Hemoglobin subunit alpha (HBA) (Pteronura brasiliensis (Giant otter)).